A 432-amino-acid chain; its full sequence is Histidine--tRNA ligase (432 aa).

The protein belongs to the class-II aminoacyl-tRNA synthetase family.

The protein localises to the cytoplasm. It catalyses the reaction tRNA(His) + L-histidine + ATP = L-histidyl-tRNA(His) + AMP + diphosphate + H(+). The sequence is that of Histidine--tRNA ligase from Pyrococcus furiosus (strain ATCC 43587 / DSM 3638 / JCM 8422 / Vc1).